The sequence spans 65 residues: U2-theraphotoxin-Pc1a (65 aa).

The first 20 residues, 1 to 20 (MGFKLVLFIAVLTLVGSSNA), serve as a signal peptide directing secretion. Positions 21-36 (EISAKMDSRDSPMIQE) are excised as a propeptide. Cystine bridges form between cysteine 39-cysteine 56, cysteine 46-cysteine 59, and cysteine 55-cysteine 64.

This sequence belongs to the neurotoxin 36 family. 02 subfamily. In terms of tissue distribution, expressed by the venom gland.

Its subcellular location is the secreted. Its function is as follows. Possesses strong antiplasmodial activity against the intra-erythrocyte stage of P.falciparum in vitro. IC(50) for inhibiting P.falciparum growth is 1.15 uM. Specifically interacts with infected erythrocytes. Does not lyse erythrocytes, is not cytotoxic to nucleated mammalian cells, and does not inhibit neuromuscular function. Has neither antibacterial nor antifungal activity. This is U2-theraphotoxin-Pc1a from Psalmopoeus cambridgei (Trinidad chevron tarantula).